We begin with the raw amino-acid sequence, 272 residues long: MTREIAIGNVKMGGSRPLVLIAGPCVIENETATLRCAERLMTIVNGLSIPLIFKASYDKANRTSVTAFRGPGLKEGLRILAKVKESLGLPVISDIHSIEQVQPAAEVLDILQIPAFLCRQTDLLVEAARTGCVVNVKKGQFLAPWDMENVVGKIVASGNERIILTERGASFGYNNLVSDMRSLPIMRRFGFPVVFDATHSVQLPGGQGGSSGGQREFVEYLSRAAVATGIDGVFLEVHEEPDKALCDGPNSVPLDDLPVLLKKLKAIDAIVK.

Belongs to the KdsA family.

Its subcellular location is the cytoplasm. The enzyme catalyses D-arabinose 5-phosphate + phosphoenolpyruvate + H2O = 3-deoxy-alpha-D-manno-2-octulosonate-8-phosphate + phosphate. The protein operates within carbohydrate biosynthesis; 3-deoxy-D-manno-octulosonate biosynthesis; 3-deoxy-D-manno-octulosonate from D-ribulose 5-phosphate: step 2/3. Its pathway is bacterial outer membrane biogenesis; lipopolysaccharide biosynthesis. This Geobacter metallireducens (strain ATCC 53774 / DSM 7210 / GS-15) protein is 2-dehydro-3-deoxyphosphooctonate aldolase.